Reading from the N-terminus, the 162-residue chain is Phospholipase A and acyltransferase 2 (162 aa).

Topologically, residues M1 to A133 are cytoplasmic. One can recognise an LRAT domain in the interval L13 to Q129. Catalysis depends on residues H23 and H35. The active-site Acyl-thioester intermediate is C113. The helical transmembrane segment at V134–L154 threads the bilayer. The Lumenal segment spans residues A155–Q162.

It belongs to the H-rev107 family. As to expression, expressed in liver, kidney, small intestine testis and colon. Undetectable in testis, placenta, salivary gland and fetal brain.

It localises to the cytoplasm. The protein resides in the membrane. It catalyses the reaction a 1,2-diacyl-sn-glycero-3-phosphocholine + H2O = a 1-acyl-sn-glycero-3-phosphocholine + a fatty acid + H(+). It carries out the reaction a 1,2-diacyl-sn-glycero-3-phosphocholine + H2O = a 2-acyl-sn-glycero-3-phosphocholine + a fatty acid + H(+). The enzyme catalyses a 1,2-diacyl-sn-glycero-3-phosphoethanolamine + a 1,2-diacyl-sn-glycero-3-phosphocholine = an N-acyl-1,2-diacyl-sn-glycero-3-phosphoethanolamine + a 1-acyl-sn-glycero-3-phosphocholine + H(+). The catalysed reaction is a 1,2-diacyl-sn-glycero-3-phosphoethanolamine + a 1,2-diacyl-sn-glycero-3-phosphocholine = an N-acyl-1,2-diacyl-sn-glycero-3-phosphoethanolamine + a 2-acyl-sn-glycero-3-phosphocholine + H(+). It catalyses the reaction 1,2-dihexadecanoyl-sn-glycero-3-phosphocholine + H2O = 1-hexadecanoyl-sn-glycero-3-phosphocholine + hexadecanoate + H(+). It carries out the reaction 1,2-dihexadecanoyl-sn-glycero-3-phosphocholine + H2O = 2-hexadecanoyl-sn-glycero-3-phosphocholine + hexadecanoate + H(+). The enzyme catalyses 1-hexadecanoyl-2-(9Z-octadecenoyl)-sn-glycero-3-phosphocholine + H2O = 2-(9Z-octadecenoyl)-sn-glycero-3-phosphocholine + hexadecanoate + H(+). The catalysed reaction is 1-hexadecanoyl-2-(9Z-octadecenoyl)-sn-glycero-3-phosphocholine + H2O = 1-hexadecanoyl-sn-glycero-3-phosphocholine + (9Z)-octadecenoate + H(+). It catalyses the reaction 1-hexadecanoyl-2-(5Z,8Z,11Z,14Z-eicosatetraenoyl)-sn-glycero-3-phosphocholine + H2O = 2-(5Z,8Z,11Z,14Z)-eicosatetraenoyl-sn-glycero-3-phosphocholine + hexadecanoate + H(+). It carries out the reaction 1-hexadecanoyl-2-(9Z,12Z-octadecadienoyl)-sn-glycero-3-phosphoethanolamine + H2O = 1-hexadecanoyl-sn-glycero-3-phosphoethanolamine + (9Z,12Z)-octadecadienoate + H(+). The enzyme catalyses 1-hexadecanoyl-2-(9Z,12Z-octadecadienoyl)-sn-glycero-3-phosphoethanolamine + H2O = 2-(9Z,12Z)-octadecadienoyl-sn-glycero-3-phosphoethanolamine + hexadecanoate + H(+). The catalysed reaction is 1-hexadecanoyl-2-(5Z,8Z,11Z,14Z-eicosatetraenoyl)-sn-glycero-3-phosphoethanolamine + H2O = 1-hexadecanoyl-sn-glycero-3-phosphoethanolamine + (5Z,8Z,11Z,14Z)-eicosatetraenoate + H(+). It catalyses the reaction 1-hexadecanoyl-2-(5Z,8Z,11Z,14Z-eicosatetraenoyl)-sn-glycero-3-phosphoethanolamine + H2O = 2-(5Z,8Z,11Z,14Z)-eicosatetraenoyl-sn-glycero-3-phosphoethanolamine + hexadecanoate + H(+). It carries out the reaction 1,2-di-(9Z-octadecenoyl)-sn-glycero-3-phosphoethanolamine + 1,2-dihexadecanoyl-sn-glycero-3-phosphocholine = N-hexadecanoyl-1,2-di-(9Z-octadecenoyl)-sn-glycero-3-phosphoethanolamine + 2-hexadecanoyl-sn-glycero-3-phosphocholine + H(+). The enzyme catalyses 1,2-di-(9Z-octadecenoyl)-sn-glycero-3-phosphoethanolamine + 1,2-dihexadecanoyl-sn-glycero-3-phosphocholine = N-hexadecanoyl-1,2-di-(9Z-octadecenoyl)-sn-glycero-3-phosphoethanolamine + 1-hexadecanoyl-sn-glycero-3-phosphocholine + H(+). The catalysed reaction is 1-hexanoyl-2-acyl-sn-glycero-3-phosphocholine + H2O = 1-hexanoyl-sn-glycero-3-phosphocholine + a fatty acid + H(+). It catalyses the reaction 1,2-diheptadecanoyl-sn-glycero-3-phosphoethanolamine + 1-(9Z-octadecenoyl)-2-hexadecanoyl-sn-glycero-3-phosphocholine = 1,2-diheptadecanoyl-sn-glycero-3-phospho-N-hexadecanoyl-ethanolamine + 1-(9Z-octadecenoyl)-sn-glycero-3-phosphocholine + H(+). It carries out the reaction 1,2-diheptadecanoyl-sn-glycero-3-phosphoethanolamine + 1-(9Z-octadecenoyl)-2-hexadecanoyl-sn-glycero-3-phosphocholine = 1,2-diheptadecanoyl-sn-glycero-3-phospho-N-(9Z-octadecenoyl)-ethanolamine + 2-hexadecanoyl-sn-glycero-3-phosphocholine + H(+). The enzyme catalyses 1,2-dihexanoyl-sn-glycero-3-phosphocholine + 1,2-diheptanoyl-sn-glycero-3-phosphocholine = 1-heptanoyl-2-hexanoyl-sn-glycero-3-phosphocholine + 1-hexanoyl-2-heptanoyl-sn-glycero-3-phosphocholine. The catalysed reaction is 1,2-diheptanoyl-sn-glycero-3-phosphocholine + 1,2-dihexadecanoyl-sn-glycero-3-phosphocholine = 1-hexadecanoyl-2-heptanoyl-sn-glycero-3-phosphocholine + 1-heptanoyl-2-hexadecanoyl-sn-glycero-3-phosphocholine. It catalyses the reaction 1,2-dihexanoyl-sn-glycero-3-phosphoethanolamine + 1,2-diheptanoyl-sn-glycero-3-phosphocholine = 1-heptanoyl-2-hexanoyl-sn-glycero-3-phosphoethanolamine + 1-hexanoyl-2-heptanoyl-sn-glycero-3-phosphocholine. It carries out the reaction 1-hexanoyl-2-acyl-sn-glycero-3-phosphocholine + H2O = hexanoate + a 2-acyl-sn-glycero-3-phosphocholine + H(+). The enzyme catalyses 1,2-dihexanoyl-sn-glycero-3-phosphoethanolamine + 2-heptanoyl-sn-glycero-3-phosphocholine = hexanoyl-sn-glycero-3-phosphoethanolamine + 1-hexanoyl-2-heptanoyl-sn-glycero-3-phosphocholine. Functionally, exhibits both phospholipase A1/2 and acyltransferase activities. Shows phospholipase A1 (PLA1) and A2 (PLA2) activity, catalyzing the calcium-independent release of fatty acids from the sn-1 or sn-2 position of glycerophospholipids. For most substrates, PLA1 activity is much higher than PLA2 activity. Shows O-acyltransferase activity, catalyzing the transfer of a fatty acyl group from glycerophospholipid to the hydroxyl group of lysophospholipid. Shows N-acyltransferase activity, catalyzing the calcium-independent transfer of a fatty acyl group at the sn-1 position of phosphatidylcholine (PC) and other glycerophospholipids to the primary amine of phosphatidylethanolamine (PE), forming N-acylphosphatidylethanolamine (NAPE), which serves as precursor for N-acylethanolamines (NAEs). Catalyzes N-acylation of PE using both sn-1 and sn-2 palmitoyl groups of PC as acyl donor. Exhibits high phospholipase A1/2 activity and low N-acyltransferase activity. The polypeptide is Phospholipase A and acyltransferase 2 (Homo sapiens (Human)).